The sequence spans 372 residues: N-methyl-L-tryptophan oxidase (372 aa).

4–34 (DLIIIGSGSVGAAAGYYATRAGLKVLMTDAH) contacts FAD. The residue at position 307 (Cys-307) is an S-8alpha-FAD cysteine.

The protein belongs to the MSOX/MTOX family. MTOX subfamily. In terms of assembly, monomer. The cofactor is FAD.

The catalysed reaction is N(alpha)-methyl-L-tryptophan + O2 + H2O = L-tryptophan + formaldehyde + H2O2. Catalyzes the oxidative demethylation of N-methyl-L-tryptophan. This Salmonella agona (strain SL483) protein is N-methyl-L-tryptophan oxidase.